The chain runs to 227 residues: Ribonuclease 3 (227 aa).

Residues 6-128 enclose the RNase III domain; the sequence is ASDYQQRIGY…VIAAIYLDAD (123 aa). Mg(2+) is bound at residue glutamate 41. Aspartate 45 is an active-site residue. Mg(2+) contacts are provided by aspartate 114 and glutamate 117. Glutamate 117 is an active-site residue. The region spanning 155–225 is the DRBM domain; sequence DPKTRLQEWL…ASHAIDQLDS (71 aa). Basic and acidic residues predominate over residues 203 to 212; the sequence is GEGSSRRLAE. Residues 203–227 are disordered; that stretch reads GEGSSRRLAEQDAASHAIDQLDSNK.

It belongs to the ribonuclease III family. In terms of assembly, homodimer. Mg(2+) serves as cofactor.

Its subcellular location is the cytoplasm. It carries out the reaction Endonucleolytic cleavage to 5'-phosphomonoester.. In terms of biological role, digests double-stranded RNA. Involved in the processing of primary rRNA transcript to yield the immediate precursors to the large and small rRNAs (23S and 16S). Processes some mRNAs, and tRNAs when they are encoded in the rRNA operon. Processes pre-crRNA and tracrRNA of type II CRISPR loci if present in the organism. The polypeptide is Ribonuclease 3 (Xylella fastidiosa (strain 9a5c)).